The primary structure comprises 464 residues: Arabinose-proton symporter (464 aa).

12 helical membrane-spanning segments follow: residues 21–43 (GFVILISCAAGLGGLLYGYDTAV), 63–85 (GLVISSIMIGGVVGVGISGFLSD), 92–111 (ILMTAALLFAISAIVSALSQ), 116–138 (LIIARIIGGLGIGMGSSLSVTYI), 150–172 (LSSLYQLFTILGISATYFINLAV), 185–207 (GWRWMLAYGMVPSVIFFLVLLVV), 266–288 (ALVIGILLALFNQVIGMNAITYY), 303–325 (GFVTTCIVGVVEVIFTVIAVLLI), 332–354 (KLMSIGSAFMAIFMILIGTSFYF), 364–386 (VLILGFVAAFCVSVGPITWIMIS), 398–420 (AGIATIFLWGANWAIGQFVPMMI), and 424–446 (GLAYTFWIFAVINILCFLFVVTI).

Belongs to the major facilitator superfamily. Sugar transporter (TC 2.A.1.1) family.

It localises to the cell membrane. It catalyses the reaction L-arabinose(in) + H(+)(in) = L-arabinose(out) + H(+)(out). It carries out the reaction D-galactose(in) + H(+)(in) = D-galactose(out) + H(+)(out). The catalysed reaction is D-xylose(in) + H(+)(in) = D-xylose(out) + H(+)(out). In terms of biological role, uptake of L-arabinose across the cytoplasmic membrane with the concomitant transport of protons into the cell (symport system). In the presence of inducing amounts of L-arabinose, can import both D-galactose and D-xylose. Can also transport the disaccharide alpha-1,5-arabinobiose. The chain is Arabinose-proton symporter (araE) from Bacillus subtilis (strain 168).